Consider the following 388-residue polypeptide: MEPLYEEYLTHSGTIVKPYYWLSVSLNCTNCPYHIRTGEEARVPYTEFHQTFGFPWSTYPQTKHLTFYELRSSSGNLIQKGLASNCTGSHTHPESMLFERDGYLDSLIFHDSNIRHIILYSNNSPCDEANHCCISKMYNFLMNYPEVTLSVFFSQLYHTENQFPTSAWNREALRGLASLWPQVTLSAISGGIWQSILETFVSGISEGLTAVRPFTAGRTLTDRYNAYEINCITEVKPYFTDALHSWQKENQDQKVWAASENQPLHNTTPAQWQPDMSQDCRTPAVFMLVPYRDLPPIHVNPSPQKPRTVVRHLNTLQLSASKVKALRKSPSGRPVKKEEARKGSTRSQEANETNKSKWKKQTLFIKSNICHLLEREQKKIGILSSWSV.

A CMP/dCMP-type deaminase domain is found at 60–176 (PQTKHLTFYE…AWNREALRGL (117 aa)). Residue H92 participates in Zn(2+) binding. E94 acts as the Proton donor in catalysis. Zn(2+) is bound by residues C126 and C133. The disordered stretch occupies residues 322–356 (KVKALRKSPSGRPVKKEEARKGSTRSQEANETNKS).

The protein belongs to the cytidine and deoxycytidylate deaminase family. It depends on Zn(2+) as a cofactor.

Functionally, putative C to U editing enzyme whose physiological substrate is not yet known. This is Putative C-&gt;U-editing enzyme APOBEC-4 (Apobec4) from Rattus norvegicus (Rat).